The primary structure comprises 742 residues: Serine/threonine-protein kinase SKY1 (742 aa).

The disordered stretch occupies residues lysine 13–proline 146. A compositionally biased stretch (polar residues) spans aspartate 19–glutamine 35. Residues threonine 56 to alanine 73 are compositionally biased toward low complexity. Residues threonine 81 to valine 101 show a composition bias toward basic and acidic residues. Positions serine 106–serine 127 are enriched in low complexity. Basic and acidic residues predominate over residues cysteine 128–arginine 140. Residues tyrosine 158 to leucine 706 form the Protein kinase domain. Residues leucine 164–valine 172 and lysine 187 contribute to the ATP site. The active-site Proton acceptor is the aspartate 294. 2 positions are modified to phosphothreonine: threonine 383 and threonine 386. Phosphoserine is present on residues serine 388, serine 393, serine 410, serine 427, serine 432, serine 445, serine 449, and serine 453. The segment at isoleucine 459–methionine 491 is disordered. Residues aspartate 465–aspartate 489 show a composition bias toward low complexity.

This sequence belongs to the protein kinase superfamily. Ser/Thr protein kinase family.

The catalysed reaction is L-seryl-[protein] + ATP = O-phospho-L-seryl-[protein] + ADP + H(+). It catalyses the reaction L-threonyl-[protein] + ATP = O-phospho-L-threonyl-[protein] + ADP + H(+). In terms of biological role, constitutively active kinase, specifically and sequentially phosphorylates serine/arginine (SR)-type shuttling mRNA binding proteins in their RS dipeptide repeats. The protein is Serine/threonine-protein kinase SKY1 (SKY1) of Saccharomyces cerevisiae (strain ATCC 204508 / S288c) (Baker's yeast).